The primary structure comprises 119 residues: U-scoloptoxin(01)-Er1a (119 aa).

The signal sequence occupies residues 1 to 22 (MEIHSNIILLLLIALFAIFVKM). Residues 39-97 (NFACSGKKPGFYADEGFDCQVYHMCSPEGQLTTYLCGPGTIFNQKKLVCDLPTNYNCAD) form the Chitin-binding type-2 domain. Cysteines 74 and 87 form a disulfide.

The protein belongs to the scoloptoxin-01 family. Post-translationally, contains 3 disulfide bonds. As to expression, expressed by the venom gland.

Its subcellular location is the secreted. The sequence is that of U-scoloptoxin(01)-Er1a from Ethmostigmus rubripes (Giant centipede).